The chain runs to 213 residues: Ubiquitin-conjugating enzyme E2 S (213 aa).

Residues 13–159 (QIIRQVAKEV…ARMMTEIHAK (147 aa)) enclose the UBC core domain. C97 serves as the catalytic Glycyl thioester intermediate. The disordered stretch occupies residues 157–213 (HAKPTTKTAPTKNEETNCPSTSGTQSTSEGPMAKKHAGDKNAAEKKKKEKKRALRRL). The segment covering 174-185 (CPSTSGTQSTSE) has biased composition (polar residues). Residues 192-202 (HAGDKNAAEKK) are compositionally biased toward basic and acidic residues. Residues 203–213 (KKEKKRALRRL) show a composition bias toward basic residues.

This sequence belongs to the ubiquitin-conjugating enzyme family.

The catalysed reaction is S-ubiquitinyl-[E1 ubiquitin-activating enzyme]-L-cysteine + [E2 ubiquitin-conjugating enzyme]-L-cysteine = [E1 ubiquitin-activating enzyme]-L-cysteine + S-ubiquitinyl-[E2 ubiquitin-conjugating enzyme]-L-cysteine.. It participates in protein modification; protein ubiquitination. In terms of biological role, catalyzes the covalent attachment of ubiquitin to other proteins. Acts as an essential factor of the anaphase promoting complex/cyclosome (APC/C), a cell cycle-regulated ubiquitin ligase that controls progression through mitosis. Acts by specifically elongating polyubiquitin chains initiated by the E2 enzyme UBCH10 on APC/C substrates, enhancing the degradation of APC/C substrates by the proteasome and promoting mitotic exit. The chain is Ubiquitin-conjugating enzyme E2 S from Branchiostoma floridae (Florida lancelet).